The following is a 429-amino-acid chain: Saccharopine dehydrogenase-like oxidoreductase (429 aa).

A2 carries the post-translational modification N-acetylalanine. The residue at position 217 (S217) is a Phosphoserine.

This sequence belongs to the saccharopine dehydrogenase family.

The protein is Saccharopine dehydrogenase-like oxidoreductase (SCCPDH) of Pongo abelii (Sumatran orangutan).